A 166-amino-acid polypeptide reads, in one-letter code: Interferon gamma (166 aa).

Residues 1 to 23 form the signal peptide; sequence MNYTSYILAFQLCVILCSSGYYC. At glutamine 24 the chain carries Pyrrolidone carboxylic acid. N-linked (GlcNAc...) asparagine glycosylation is found at asparagine 39 and asparagine 106.

This sequence belongs to the type II (or gamma) interferon family. In terms of assembly, homodimer. Interacts with IFNGR1 (via extracellular domain); this interaction promotes IFNGR1 dimerization. In terms of tissue distribution, released primarily from activated T lymphocytes.

The protein resides in the secreted. In terms of biological role, type II interferon produced by immune cells such as T-cells and NK cells that plays crucial roles in antimicrobial, antiviral, and antitumor responses by activating effector immune cells and enhancing antigen presentation. Primarily signals through the JAK-STAT pathway after interaction with its receptor IFNGR1 to affect gene regulation. Upon IFNG binding, IFNGR1 intracellular domain opens out to allow association of downstream signaling components JAK2, JAK1 and STAT1, leading to STAT1 activation, nuclear translocation and transcription of IFNG-regulated genes. Many of the induced genes are transcription factors such as IRF1 that are able to further drive regulation of a next wave of transcription. Plays a role in class I antigen presentation pathway by inducing a replacement of catalytic proteasome subunits with immunoproteasome subunits. In turn, increases the quantity, quality, and repertoire of peptides for class I MHC loading. Increases the efficiency of peptide generation also by inducing the expression of activator PA28 that associates with the proteasome and alters its proteolytic cleavage preference. Up-regulates as well MHC II complexes on the cell surface by promoting expression of several key molecules such as cathepsins B/CTSB, H/CTSH, and L/CTSL. Participates in the regulation of hematopoietic stem cells during development and under homeostatic conditions by affecting their development, quiescence, and differentiation. The chain is Interferon gamma (IFNG) from Ailuropoda melanoleuca (Giant panda).